Reading from the N-terminus, the 5207-residue chain is NBPF family member NBPF20 (5207 aa).

64 consecutive Olduvai domains span residues 5–77 (SREL…PSCP), 80–135 (SREL…LDVD), 136–228 (RTKK…RSKK), 229–321 (ERRR…PSCP), 324–379 (SREL…LDVD), 380–472 (RTKK…RSKK), 473–565 (ERRR…PSCP), 568–623 (SREL…LDVD), 624–716 (RTKK…RSKK), 717–809 (ERRR…PSCP), 812–867 (SREL…LDVD), 868–960 (RTKK…RSKK), 961–1053 (ERRR…PSCP), 1056–1111 (SREL…LDVD), 1112–1204 (RTKK…RSKK), 1205–1297 (ERRR…PSCP), 1300–1355 (SREL…LDVD), 1356–1448 (RTKK…RSKK), 1449–1541 (ERRR…PSCP), 1544–1599 (SREL…LDVD), 1600–1692 (RTKK…RSKK), 1693–1785 (ERRR…PSCP), 1788–1843 (SREL…LDVD), 1844–1936 (RTKK…RSKK), 1937–2029 (ERRR…PSCP), 2032–2087 (SREL…LDVD), 2088–2180 (RTKK…RSKK), 2181–2273 (ERRR…PSCP), 2276–2331 (SREL…LDVD), 2332–2424 (RTKK…RSKK), 2425–2517 (ERRR…PSCP), 2520–2575 (SREL…LDVD), 2576–2668 (RTKK…RSKK), 2669–2761 (ERRR…PSCP), 2764–2819 (SREL…LDVD), 2820–2912 (RTKK…RSKK), 2913–3005 (ERRR…PSCP), 3008–3063 (SREL…LDVD), 3064–3156 (RTKK…RSKK), 3157–3249 (ERRR…PSCP), 3252–3307 (SREL…LDVD), 3308–3400 (RTKK…RSKK), 3401–3493 (ERRR…PSCP), 3496–3551 (SREL…LDVD), 3552–3644 (RTKK…RSKK), 3645–3737 (ERRR…PSCP), 3740–3795 (SREL…LDVD), 3796–3888 (RTKK…RSKK), 3889–3981 (ERRR…PSCP), 3984–4039 (SREL…LDVD), 4040–4132 (RTKK…RSKK), 4133–4225 (ERRR…PSCP), 4228–4283 (SREL…LDVD), 4284–4376 (RTKK…RSKK), 4377–4452 (ERRR…LDVD), 4453–4545 (RTKK…RSKK), 4546–4621 (ERRR…LDVD), 4622–4713 (RTKK…PSCP), 4716–4771 (SREL…LDVD), 4772–4864 (RTKK…RSKK), 4865–4957 (ERRR…PSCP), 4960–5015 (SREL…LDVD), 5016–5108 (RTKK…RSKK), and 5109–5207 (KRRR…IFPQ). 2 disordered regions span residues 137–157 (TKKD…LSRE) and 215–256 (KGKG…LDEK). Over residues 216-234 (GKGKKRRGRRSKKERRRGR) the composition is skewed to basic residues. 2 disordered regions span residues 381-403 (TKKD…RELL) and 459-513 (KGKG…DRSY). Over residues 460–478 (GKGKKRRGRRSKKERRRGR) the composition is skewed to basic residues. Over residues 492–502 (LSRELLDEKGP) the composition is skewed to basic and acidic residues. 2 disordered regions span residues 625–647 (TKKD…RELL) and 703–744 (KGKG…LDEK). A compositionally biased stretch (basic residues) spans 704 to 722 (GKGKKRRGRRSKKERRRGR). 2 disordered regions span residues 869–891 (TKKD…RELL) and 947–1001 (KGKG…DRSY). A compositionally biased stretch (basic residues) spans 948-966 (GKGKKRRGRRSKKERRRGR). Basic and acidic residues predominate over residues 980 to 990 (LSRELLDEKGP). Disordered stretches follow at residues 1113 to 1135 (TKKD…RELL) and 1191 to 1245 (KGKG…DRSY). A compositionally biased stretch (basic residues) spans 1192 to 1210 (GKGKKRRGRRSKKERRRGR). Residues 1224–1234 (LSRELLDEKGP) are compositionally biased toward basic and acidic residues. Disordered regions lie at residues 1357–1379 (TKKD…RELL) and 1435–1489 (KGKG…DRSY). A compositionally biased stretch (basic residues) spans 1436-1454 (GKGKKRRGRRSKKERRRGR). Over residues 1468–1478 (LSRELLDEKGP) the composition is skewed to basic and acidic residues. Disordered regions lie at residues 1601-1623 (TKKD…RELL) and 1679-1733 (KGKG…DRSY). The segment covering 1680–1698 (GKGKKRRGRRSKKERRRGR) has biased composition (basic residues). Over residues 1712 to 1722 (LSRELLDEKGP) the composition is skewed to basic and acidic residues. 2 disordered regions span residues 1845-1867 (TKKD…RELL) and 1923-1964 (KGKG…LDEK). The segment covering 1924 to 1942 (GKGKKRRGRRSKKERRRGR) has biased composition (basic residues). 2 disordered regions span residues 2089–2111 (TKKD…RELL) and 2167–2208 (KGKG…LDEK). The span at 2168–2186 (GKGKKRRGRRSKKERRRGR) shows a compositional bias: basic residues. Disordered regions lie at residues 2333-2355 (TKKD…RELL) and 2411-2452 (KGKG…LDEK). The segment covering 2412-2430 (GKGKKRRGRRSKKERRRGR) has biased composition (basic residues). Disordered regions lie at residues 2577-2599 (TKKD…RELL) and 2655-2709 (KGKG…DRSY). The segment covering 2656–2674 (GKGKKRRGRRSKKERRRGR) has biased composition (basic residues). Residues 2688-2698 (LSRELLDEKGP) show a composition bias toward basic and acidic residues. Disordered regions lie at residues 2821–2843 (TKKD…RELL) and 2899–2953 (KGKG…DRSY). Positions 2900-2918 (GKGKKRRGRRSKKERRRGR) are enriched in basic residues. Basic and acidic residues predominate over residues 2932 to 2942 (LSRELLDEKGP). 2 disordered regions span residues 3065-3087 (TKKD…RELL) and 3143-3197 (KGKG…DRSY). The span at 3144 to 3162 (GKGKKRRGRRSKKERRRGR) shows a compositional bias: basic residues. Residues 3176-3186 (LSRELLDEKGP) show a composition bias toward basic and acidic residues. Disordered stretches follow at residues 3309 to 3331 (TKKD…RELL) and 3387 to 3441 (KGKG…DRSY). A compositionally biased stretch (basic residues) spans 3388–3406 (GKGKKRRGRRSKKERRRGR). The segment covering 3420–3430 (LSRELLDEKGP) has biased composition (basic and acidic residues). Disordered stretches follow at residues 3553–3575 (TKKD…RELL) and 3631–3672 (KGKG…LDEK). The segment covering 3632–3650 (GKGKKRRGRRSKKERRRGR) has biased composition (basic residues). 2 disordered regions span residues 3797–3819 (TKKD…RELL) and 3875–3916 (KGKG…LDEK). The span at 3876 to 3894 (GKGKKRRGRRSKKERRRGR) shows a compositional bias: basic residues. Disordered stretches follow at residues 4041–4063 (TKKD…RELL) and 4119–4160 (KGKG…LDEK). Positions 4120–4138 (GKGKKRRGRRSKKERRRGR) are enriched in basic residues. 4 disordered regions span residues 4285 to 4307 (TKKD…RELL), 4361 to 4404 (EKKG…LDEK), 4453 to 4474 (RTKK…LSRE), and 4530 to 4573 (EKKG…LDEK). Positions 4364 to 4382 (GKGKKRRGRRSKKERRRGR) are enriched in basic residues. Residues 4533–4551 (GKGKKRRGRRSKKERRRGR) show a composition bias toward basic residues. Disordered regions lie at residues 4773–4793 (TKKD…LSRE) and 4851–4889 (KGKG…RELL). Residues 4852–4870 (GKGKKRRGRRSKKERRRGR) are compositionally biased toward basic residues. Disordered stretches follow at residues 5017 to 5037 (TKKD…LSRE) and 5094 to 5128 (KKGK…CPRL). A compositionally biased stretch (basic residues) spans 5096 to 5114 (GKGKKRRGRRSKKKRRRGR).

The protein belongs to the NBPF family.

Its subcellular location is the cytoplasm. This Homo sapiens (Human) protein is NBPF family member NBPF20.